The chain runs to 153 residues: Late embryogenesis abundant protein B19.4 (153 aa).

Residues 1–153 form a disordered region; sequence MASGQQERSE…IDESKFKTKS (153 aa). Basic and acidic residues-rich tracts occupy residues 7 to 19, 32 to 122, and 133 to 153; these read ERSE…REGE, EAQE…EMGR, and GGER…KTKS. 4 consecutive repeat copies span residues 43 to 62, 63 to 82, 83 to 102, and 103 to 122. Positions 43 to 122 are 4 X 20 AA tandem repeats; it reads RGGQTRKEQL…GEEGYREMGR (80 aa).

It belongs to the small hydrophilic plant seed protein family.

Its function is as follows. Lea proteins are late embryonic proteins abundant in higher plant seed embryos. The protein is Late embryogenesis abundant protein B19.4 (B19.4) of Hordeum vulgare (Barley).